Reading from the N-terminus, the 109-residue chain is MKNKRVIKKNFEFQEIINYKKTIKNFCFVIYYKDNEESYLKYGISVGKKIGNAVIRNKVKRQIRMILKQNISEIGTVSKDIIILVRKSVLELKYATLSKLLIKLIKEIK.

It belongs to the RnpA family. As to quaternary structure, consists of a catalytic RNA component (M1 or rnpB) and a protein subunit.

It carries out the reaction Endonucleolytic cleavage of RNA, removing 5'-extranucleotides from tRNA precursor.. Functionally, RNaseP catalyzes the removal of the 5'-leader sequence from pre-tRNA to produce the mature 5'-terminus. It can also cleave other RNA substrates such as 4.5S RNA. The protein component plays an auxiliary but essential role in vivo by binding to the 5'-leader sequence and broadening the substrate specificity of the ribozyme. This chain is Ribonuclease P protein component, found in Mycoplasma capricolum subsp. capricolum (strain California kid / ATCC 27343 / NCTC 10154).